Here is a 353-residue protein sequence, read N- to C-terminus: UDP-3-O-acylglucosamine N-acyltransferase (353 aa).

H242 acts as the Proton acceptor in catalysis.

This sequence belongs to the transferase hexapeptide repeat family. LpxD subfamily. In terms of assembly, homotrimer.

The enzyme catalyses a UDP-3-O-[(3R)-3-hydroxyacyl]-alpha-D-glucosamine + a (3R)-hydroxyacyl-[ACP] = a UDP-2-N,3-O-bis[(3R)-3-hydroxyacyl]-alpha-D-glucosamine + holo-[ACP] + H(+). It participates in bacterial outer membrane biogenesis; LPS lipid A biosynthesis. Functionally, catalyzes the N-acylation of UDP-3-O-acylglucosamine using 3-hydroxyacyl-ACP as the acyl donor. Is involved in the biosynthesis of lipid A, a phosphorylated glycolipid that anchors the lipopolysaccharide to the outer membrane of the cell. The protein is UDP-3-O-acylglucosamine N-acyltransferase of Pseudomonas paraeruginosa (strain DSM 24068 / PA7) (Pseudomonas aeruginosa (strain PA7)).